Consider the following 86-residue polypeptide: Exodeoxyribonuclease 7 small subunit (86 aa).

The disordered stretch occupies residues 1-26 (MQDELFETEKIPPKNTKNTKNAPKKS).

Belongs to the XseB family. As to quaternary structure, heterooligomer composed of large and small subunits.

The protein localises to the cytoplasm. It carries out the reaction Exonucleolytic cleavage in either 5'- to 3'- or 3'- to 5'-direction to yield nucleoside 5'-phosphates.. Functionally, bidirectionally degrades single-stranded DNA into large acid-insoluble oligonucleotides, which are then degraded further into small acid-soluble oligonucleotides. The sequence is that of Exodeoxyribonuclease 7 small subunit from Helicobacter pylori (strain ATCC 700392 / 26695) (Campylobacter pylori).